A 37-amino-acid polypeptide reads, in one-letter code: Serrulin (37 aa).

The disordered stretch occupies residues 16 to 37 (FGGGGIGGGGFGGGYGGGKIKG). Lys36 is subject to Lysine amide.

As to expression, expressed in hemocytes (at protein level).

It is found in the secreted. Its function is as follows. Antimicrobial protein with activity against Gram-positive and Gram-negative bacteria, filamentous fungus, and yeast. Was tested against Micrococcus luteus A270 (MIC=0.5-1 uM), Echerichia coli SBS 363 (MIC=9-16 uM), Pseudomonas aeruginosa (MIC=0.01-0.3 uM), Aspergillus niger (MIC=3-6 uM), and Candida albicans MDM8 (MIC=1.5-3 uM). Has no hemolytic activity against human erythrocytes. The sequence is that of Serrulin from Tityus serrulatus (Brazilian scorpion).